The chain runs to 465 residues: Cysteine--tRNA ligase (465 aa).

Cys-27 provides a ligand contact to Zn(2+). Residues 29–39 (PTVYDDAHLGH) carry the 'HIGH' region motif. Residues Cys-207, His-237, and Glu-241 each coordinate Zn(2+). A 'KMSKS' region motif is present at residues 269-273 (KMSKS). Lys-272 is a binding site for ATP.

The protein belongs to the class-I aminoacyl-tRNA synthetase family. In terms of assembly, monomer. Zn(2+) serves as cofactor.

The protein resides in the cytoplasm. The enzyme catalyses tRNA(Cys) + L-cysteine + ATP = L-cysteinyl-tRNA(Cys) + AMP + diphosphate. This chain is Cysteine--tRNA ligase (cysS), found in Helicobacter pylori (strain J99 / ATCC 700824) (Campylobacter pylori J99).